Consider the following 297-residue polypeptide: Coatomer subunit epsilon-2 (297 aa).

This sequence belongs to the COPE family. Oligomeric complex that consists of at least the alpha, beta, beta', gamma, delta, epsilon and zeta subunits.

Its subcellular location is the cytoplasm. It localises to the golgi apparatus membrane. It is found in the cytoplasmic vesicle. The protein localises to the COPI-coated vesicle membrane. Its function is as follows. The coatomer is a cytosolic protein complex that binds to dilysine motifs and reversibly associates with Golgi non-clathrin-coated vesicles, which further mediate biosynthetic protein transport from the ER, via the Golgi up to the trans Golgi network. The coatomer complex is required for budding from Golgi membranes, and is essential for the retrograde Golgi-to-ER transport of dilysine-tagged proteins. This Oryza sativa subsp. japonica (Rice) protein is Coatomer subunit epsilon-2.